The following is a 63-amino-acid chain: Large ribosomal subunit protein bL28 (63 aa).

Belongs to the bacterial ribosomal protein bL28 family.

The polypeptide is Large ribosomal subunit protein bL28 (Desulfosudis oleivorans (strain DSM 6200 / JCM 39069 / Hxd3) (Desulfococcus oleovorans)).